The sequence spans 561 residues: Putative cysteine ligase BshC (561 aa).

Positions 472 to 517 (LAQSVEKVMQSTLNQVENLKSKTIKAEKQRHNDLIAQIEKSRDNLL) form a coiled coil.

It belongs to the BshC family.

The polypeptide is Putative cysteine ligase BshC (Chloroherpeton thalassium (strain ATCC 35110 / GB-78)).